The following is a 141-amino-acid chain: Galactose-6-phosphate isomerase subunit LacA 1 (141 aa).

It belongs to the LacAB/RpiB family. In terms of assembly, heteromultimeric protein consisting of LacA and LacB.

The enzyme catalyses aldehydo-D-galactose 6-phosphate = keto-D-tagatose 6-phosphate. Its pathway is carbohydrate metabolism; D-galactose 6-phosphate degradation; D-tagatose 6-phosphate from D-galactose 6-phosphate: step 1/1. The polypeptide is Galactose-6-phosphate isomerase subunit LacA 1 (Streptococcus pyogenes serotype M18 (strain MGAS8232)).